A 150-amino-acid chain; its full sequence is MKCPFCAFADSKVVDSRPDKGGSTIRRRRECESCGKRFTTHERVEEILPLVIKKDGRREPFDRMKLVAGIQKACEKRPVSVETIERLVDRLEIQMQESGEKEIPSKSLGEWVMAELHSIDQVAYVRFASVYRSFKDITEFMSELQDLLKK.

The segment at Cys-3–Cys-34 is a zinc-finger region. The ATP-cone domain maps to Pro-49–Glu-139.

It belongs to the NrdR family. Zn(2+) is required as a cofactor.

In terms of biological role, negatively regulates transcription of bacterial ribonucleotide reductase nrd genes and operons by binding to NrdR-boxes. The protein is Transcriptional repressor NrdR of Geotalea uraniireducens (strain Rf4) (Geobacter uraniireducens).